The following is a 263-amino-acid chain: Putative SNAP25 homologous protein SNAP30 (263 aa).

2 disordered regions span residues 1–61 (MFGF…LQSQ) and 132–209 (NLGG…DGLS). 2 stretches are compositionally biased toward polar residues: residues 8–34 (PGNN…TSSE) and 52–61 (FNDSGGLQSQ). Positions 158 to 173 (KPSKKSENHKEEREKL) are enriched in basic and acidic residues. Positions 180–194 (RSSSQPALDQPTNAL) are enriched in polar residues. Over residues 197–206 (VEQEKAKQDD) the composition is skewed to basic and acidic residues. A t-SNARE coiled-coil homology domain is found at 198-260 (EQEKAKQDDG…QGANQRARHL (63 aa)).

The protein belongs to the SNAP-25 family.

The protein localises to the membrane. It is found in the cytoplasm. In terms of biological role, vesicle trafficking protein that functions in the secretory pathway. The sequence is that of Putative SNAP25 homologous protein SNAP30 (SNAP30) from Arabidopsis thaliana (Mouse-ear cress).